A 1463-amino-acid chain; its full sequence is DNA polymerase III PolC-type (1463 aa).

The Exonuclease domain maps to 425–581; that stretch reads YVVFDVETTG…YDAEATGRLL (157 aa).

Belongs to the DNA polymerase type-C family. PolC subfamily.

Its subcellular location is the cytoplasm. The enzyme catalyses DNA(n) + a 2'-deoxyribonucleoside 5'-triphosphate = DNA(n+1) + diphosphate. Required for replicative DNA synthesis. This DNA polymerase also exhibits 3' to 5' exonuclease activity. The polypeptide is DNA polymerase III PolC-type (Streptococcus suis (strain 98HAH33)).